Here is a 97-residue protein sequence, read N- to C-terminus: MTAKVIQMSSNDSAEVIRQCLQVLDSITSDSSVPRNIRRSVNEIMDILNNESEPLFLRAASSISILEDISNDPNLPLHTRTLIWNLSSQLETIPVDE.

Belongs to the UPF0147 family.

This Methanosarcina acetivorans (strain ATCC 35395 / DSM 2834 / JCM 12185 / C2A) protein is UPF0147 protein MA_0092.